Here is a 129-residue protein sequence, read N- to C-terminus: Small ribosomal subunit protein uS9 (129 aa).

The protein belongs to the universal ribosomal protein uS9 family.

The polypeptide is Small ribosomal subunit protein uS9 (Helicobacter pylori (strain HPAG1)).